We begin with the raw amino-acid sequence, 297 residues long: Probable endonuclease 4 (297 aa).

His-69, His-110, Glu-145, Asp-179, His-182, His-214, Asp-227, His-229, and Glu-259 together coordinate Zn(2+).

It belongs to the AP endonuclease 2 family. Requires Zn(2+) as cofactor.

The enzyme catalyses Endonucleolytic cleavage to 5'-phosphooligonucleotide end-products.. In terms of biological role, endonuclease IV plays a role in DNA repair. It cleaves phosphodiester bonds at apurinic or apyrimidinic (AP) sites, generating a 3'-hydroxyl group and a 5'-terminal sugar phosphate. The polypeptide is Probable endonuclease 4 (Bacillus subtilis (strain 168)).